Reading from the N-terminus, the 114-residue chain is Iron-sulfur cluster insertion protein ErpA (114 aa).

Iron-sulfur cluster-binding residues include Cys42, Cys106, and Cys108.

It belongs to the HesB/IscA family. As to quaternary structure, homodimer. Requires iron-sulfur cluster as cofactor.

Functionally, required for insertion of 4Fe-4S clusters for at least IspG. The polypeptide is Iron-sulfur cluster insertion protein ErpA (Hamiltonella defensa subsp. Acyrthosiphon pisum (strain 5AT)).